Reading from the N-terminus, the 383-residue chain is Paralemmin-1 (383 aa).

Met-1 is subject to N-acetylmethionine. A coiled-coil region spans residues Ala-5–Glu-102. Disordered stretches follow at residues Arg-51–Met-163, Thr-242–Pro-295, and Ala-334–Pro-375. The segment covering Asp-69–Asp-96 has biased composition (basic and acidic residues). Polar residues-rich tracts occupy residues Lys-109–Ser-124 and Glu-133–Leu-143. A phosphoserine mark is found at Ser-116, Ser-122, and Ser-124. 3 positions are modified to phosphothreonine: Thr-141, Thr-145, and Thr-153. Phosphoserine is present on residues Ser-157 and Ser-161. Phosphothreonine is present on Thr-242. Ser-244 carries the post-translational modification Phosphoserine. The span at Gly-257 to Thr-273 shows a compositional bias: basic and acidic residues. Residues Gly-285 to Pro-295 are compositionally biased toward low complexity. Ser-345 carries the post-translational modification Phosphoserine. The span at Gln-357–Thr-367 shows a compositional bias: polar residues. A phosphothreonine mark is found at Thr-361, Thr-362, and Thr-363. The residue at position 365 (Ser-365) is a Phosphoserine. A Phosphothreonine modification is found at Thr-367. 2 S-palmitoyl cysteine lipidation sites follow: Cys-377 and Cys-379. The residue at position 380 (Cys-380) is a Cysteine methyl ester. A lipid anchor (S-farnesyl cysteine) is attached at Cys-380. A propeptide spans Ser-381–Met-383 (removed in mature form).

The protein belongs to the paralemmin family. Interacts with dopamine receptor DRD3. As to expression, expression is highest in brain, intermediate in adrenal gland and kidney, and much lower or undetectable in other tissues. Isoform 1 is the predominant isoform in most tissues except brain and kidney where isoform 2 predominates.

It is found in the cell membrane. It localises to the cell projection. The protein localises to the filopodium membrane. The protein resides in the axon. Its subcellular location is the dendrite. It is found in the dendritic spine. It localises to the basolateral cell membrane. The protein localises to the apicolateral cell membrane. Its function is as follows. Involved in plasma membrane dynamics and cell process formation. Isoform 1 and isoform 2 are necessary for axonal and dendritic filopodia induction, for dendritic spine maturation and synapse formation in a palmitoylation-dependent manner. This chain is Paralemmin-1 (Palm), found in Mus musculus (Mouse).